Here is a 111-residue protein sequence, read N- to C-terminus: Anti-adapter protein IraM (111 aa).

It belongs to the IraM/RssC family.

It is found in the cytoplasm. Functionally, involved in the stabilization of the sigma stress factor RpoS. The protein is Anti-adapter protein IraM of Cronobacter sakazakii (strain ATCC BAA-894) (Enterobacter sakazakii).